The following is a 647-amino-acid chain: tRNA uridine 5-carboxymethylaminomethyl modification enzyme MnmG (647 aa).

FAD contacts are provided by residues 22–27 (GAGHAG), V134, and S189. 283–297 (GARYCPSIEDKIMRF) contributes to the NAD(+) binding site. Residue Q380 coordinates FAD.

Belongs to the MnmG family. In terms of assembly, homodimer. Heterotetramer of two MnmE and two MnmG subunits. FAD is required as a cofactor.

The protein localises to the cytoplasm. Functionally, NAD-binding protein involved in the addition of a carboxymethylaminomethyl (cmnm) group at the wobble position (U34) of certain tRNAs, forming tRNA-cmnm(5)s(2)U34. The sequence is that of tRNA uridine 5-carboxymethylaminomethyl modification enzyme MnmG from Desulfotalea psychrophila (strain LSv54 / DSM 12343).